A 510-amino-acid chain; its full sequence is Calmodulin-binding receptor-like cytoplasmic kinase 3 (510 aa).

The N-terminal stretch at 1 to 30 is a signal peptide; the sequence is MGGDDLSFTRLVITALFGLLMLLQIKETSA. Residues 166–178 are compositionally biased toward polar residues; that stretch reads VSSFEMSPSSEKI. Residues 166–209 form a disordered region; sequence VSSFEMSPSSEKIPQSPFRAPPSPSRVPQSPSRYAMSPRPSRLG. A Phosphothreonine modification is found at threonine 214. Positions 225–499 constitute a Protein kinase domain; sequence FADSHQIGEG…MEAVGKQLWA (275 aa). ATP contacts are provided by residues 231–239 and lysine 253; that span reads IGEGGFGVV. The tract at residues 240–265 is caM-binding; that stretch reads FKGVLDDGQVVAIKRAKKEHFENLRT. The Proton acceptor role is filled by aspartate 350. Position 354 is a phosphoserine (serine 354). 2 positions are modified to phosphothreonine: threonine 386 and threonine 391. Tyrosine 399 carries the post-translational modification Phosphotyrosine.

This sequence belongs to the protein kinase superfamily. Ser/Thr protein kinase family. Interacts with calmodulin (CaM) in a Ca(2+)-dependent manner.

It is found in the cytoplasm. The enzyme catalyses L-seryl-[protein] + ATP = O-phospho-L-seryl-[protein] + ADP + H(+). It catalyses the reaction L-threonyl-[protein] + ATP = O-phospho-L-threonyl-[protein] + ADP + H(+). This is Calmodulin-binding receptor-like cytoplasmic kinase 3 (CRCK3) from Arabidopsis thaliana (Mouse-ear cress).